The chain runs to 209 residues: Kynurenine formamidase (209 aa).

Trp-20 contributes to the substrate binding site. Residues His-50, His-54, and Asp-56 each contribute to the Zn(2+) site. His-60 functions as the Proton donor/acceptor in the catalytic mechanism. Zn(2+) contacts are provided by His-161 and Glu-173.

The protein belongs to the Cyclase 1 superfamily. KynB family. Homodimer. Requires Zn(2+) as cofactor.

The enzyme catalyses N-formyl-L-kynurenine + H2O = L-kynurenine + formate + H(+). Its pathway is amino-acid degradation; L-tryptophan degradation via kynurenine pathway; L-kynurenine from L-tryptophan: step 2/2. Its function is as follows. Catalyzes the hydrolysis of N-formyl-L-kynurenine to L-kynurenine, the second step in the kynurenine pathway of tryptophan degradation. This Bacillus cytotoxicus (strain DSM 22905 / CIP 110041 / 391-98 / NVH 391-98) protein is Kynurenine formamidase.